The following is a 358-amino-acid chain: Trans-enoyl reductase pvhC (358 aa).

48 to 51 (VDSK) lines the NADP(+) pocket. Residue 134 to 141 (ISFLTSGL) coordinates substrate. Residues 169 to 172 (SSSC), 192 to 195 (SPHN), Tyr210, and 257 to 258 (LE) each bind NADP(+). Position 278–282 (278–282 (GPSLL)) interacts with substrate. Position 347–348 (347–348 (VS)) interacts with NADP(+).

It belongs to the zinc-containing alcohol dehydrogenase family. In terms of assembly, monomer.

The protein operates within secondary metabolite biosynthesis. Trans-enoyl reductase; part of the gene cluster that mediates the biosynthesis of varicidin A, an antifungal natural product containing a cis-octahydrodecalin core. The PKS module of pvhA together with the enoylreductase pvhC catalyze the formation of the polyketide unit which is then conjugated to L-isoleucine by the condensation domain of the NRPS module. Activity of the Dieckmann cyclase domain (RED) of pvhA results in release of an acyclic tetramate. The cytochrome P450 monooxygenase pvhE then catalyzes the oxidation of the C21 methyl group to a to carboxylate group. The methyltransferase pvhD then further methylates the pvhE product. The Diels-Alderase pvhB is able to catalyze Diels-Alder cycloaddition using both pvhE and pvhD products as substrates to form the decalin ring, yielding varicidin B and A, respectively. The protein is Trans-enoyl reductase pvhC of Talaromyces variabilis (Penicillium variabile).